Here is a 356-residue protein sequence, read N- to C-terminus: Histidinol-phosphate aminotransferase 1 (356 aa).

The residue at position 213 (lysine 213) is an N6-(pyridoxal phosphate)lysine.

This sequence belongs to the class-II pyridoxal-phosphate-dependent aminotransferase family. Histidinol-phosphate aminotransferase subfamily. As to quaternary structure, homodimer. It depends on pyridoxal 5'-phosphate as a cofactor.

The enzyme catalyses L-histidinol phosphate + 2-oxoglutarate = 3-(imidazol-4-yl)-2-oxopropyl phosphate + L-glutamate. It functions in the pathway amino-acid biosynthesis; L-histidine biosynthesis; L-histidine from 5-phospho-alpha-D-ribose 1-diphosphate: step 7/9. This is Histidinol-phosphate aminotransferase 1 (hisC1) from Bordetella parapertussis (strain 12822 / ATCC BAA-587 / NCTC 13253).